Reading from the N-terminus, the 604-residue chain is MAIEFGDHSSGFHHTEVIRFINNEVLKNGGSSEFYTTFRSRSWNEIEDQLRTILVDPKVPRSLKRACTWSALALSVRVAARQRQQQARRVWRLQDQVGEHESASWTLVSELQRLREERDQAAAQLLCTQIILQEAMDEREILRGRLLQAKRSALPVVPERGMEYGKTSLLSFEEKELGDLEFIGSQNMSHLEAQIPILSCLPGLSSPWVQAMDPFLQMTMAHPVPLKAKFSLEFSFSTPVPCPALMDSEATATAMITGLPQIAPSGIQPSSLCVTLESQETIASALDQICPRQKECSEILQDVSHLADSISCCEGEGPEKPQGTSLHGDSSNNSHKDNQAIPQIMAATEKKNLMMHQGTAAVEVNSNHSIKEEPVMPKGISSQGNKTSSTKKKRPKISRRVVGLIESISHNTQCVSVTPQETHTQVNKTTSTLKTYPGNLLRKPDQGKILSCNQKEDSKTLQRLTDLGEGTRNCQKEDTFQQTTCLNAGVSPNEKKMPQGTGKNQSQRQKEEPNSFQANHPRKCKSYLMNKYPKIQLATKQRVKQPEGIKSLESKQPQETKSSESKQQEKPLSHRTSANCICPSSKTVNRSWYKGCYKCAKTSA.

Disordered stretches follow at residues 314-337, 374-397, 485-523, and 538-580; these read EGEGPEKPQGTSLHGDSSNNSHKD, PVMPKGISSQGNKTSSTKKKRPKI, CLNAGVSPNEKKMPQGTGKNQSQRQKEEPNSFQANHPRK, and ATKQ…SANC. Residues 322–333 are compositionally biased toward polar residues; it reads QGTSLHGDSSNN. Residues 544 to 572 are compositionally biased toward basic and acidic residues; sequence KQPEGIKSLESKQPQETKSSESKQQEKPL.

This sequence belongs to the TEX13 family.

Its function is as follows. Plays a role in transcriptional repression. This chain is Testis-expressed protein 13C-1, found in Mus musculus (Mouse).